A 366-amino-acid polypeptide reads, in one-letter code: Anhydro-N-acetylmuramic acid kinase (366 aa).

10 to 17 (GTSLDGVD) is an ATP binding site.

Belongs to the anhydro-N-acetylmuramic acid kinase family.

The enzyme catalyses 1,6-anhydro-N-acetyl-beta-muramate + ATP + H2O = N-acetyl-D-muramate 6-phosphate + ADP + H(+). The protein operates within amino-sugar metabolism; 1,6-anhydro-N-acetylmuramate degradation. It participates in cell wall biogenesis; peptidoglycan recycling. Its function is as follows. Catalyzes the specific phosphorylation of 1,6-anhydro-N-acetylmuramic acid (anhMurNAc) with the simultaneous cleavage of the 1,6-anhydro ring, generating MurNAc-6-P. Is required for the utilization of anhMurNAc either imported from the medium or derived from its own cell wall murein, and thus plays a role in cell wall recycling. The polypeptide is Anhydro-N-acetylmuramic acid kinase (Nitrobacter winogradskyi (strain ATCC 25391 / DSM 10237 / CIP 104748 / NCIMB 11846 / Nb-255)).